The following is a 464-amino-acid chain: MQTVSTEFDTIAAISTPPGEGGISIIRISGVDALKTASQIYRGKDLNKVNSHTINYGHIIDPENGNEVDEVMVSVMRAPHTYTKEDIVEINCHGGIVATNRILQIILGLDARLAKPGEFTERAFLNGRIDLSQAEAVMDLIRAKTDQSMKVALDQLDGNLSHLITNLRQNILDVLAQVEVNIDYPEYDDVETMTARLLKEKAIEVKAKIQQLLSTAKQGKVLRDGLATAIIGHPNVGKSSILNHLLHEDKAIVTDVAGTTRDVIEEYVNVQGVPLKLVDTAGIHETEDKVEKIGVDRSRKALSQADLVILVLDSSVPLRDEDRELLRETNHMQRIVVLNKSDLEVKINLNELQEYVDDKEIIKSSAVSPLGTKDLEDRIAAMFFAGSIENTSNNIMVTNARHIGLLKQADTALDAVLEGIETGMPVDLVQIDMTRTWDLLGEITGDSYQDELLDQLFSQFCLGK.

(6S)-5-formyl-5,6,7,8-tetrahydrofolate-binding residues include Arg-27, Glu-89, and Arg-128. In terms of domain architecture, TrmE-type G spans Gly-225–Phe-384. Asn-235 lines the K(+) pocket. Residues Asn-235–Ser-240, Thr-254–Thr-260, and Asp-279–Gly-282 each bind GTP. Ser-239 lines the Mg(2+) pocket. 3 residues coordinate K(+): Thr-254, Val-256, and Thr-259. Thr-260 contributes to the Mg(2+) binding site. Lys-464 provides a ligand contact to (6S)-5-formyl-5,6,7,8-tetrahydrofolate.

Belongs to the TRAFAC class TrmE-Era-EngA-EngB-Septin-like GTPase superfamily. TrmE GTPase family. As to quaternary structure, homodimer. Heterotetramer of two MnmE and two MnmG subunits. It depends on K(+) as a cofactor.

It localises to the cytoplasm. Its function is as follows. Exhibits a very high intrinsic GTPase hydrolysis rate. Involved in the addition of a carboxymethylaminomethyl (cmnm) group at the wobble position (U34) of certain tRNAs, forming tRNA-cmnm(5)s(2)U34. The polypeptide is tRNA modification GTPase MnmE (Pediococcus pentosaceus (strain ATCC 25745 / CCUG 21536 / LMG 10740 / 183-1w)).